Reading from the N-terminus, the 214-residue chain is uncharacterized protein (214 aa).

Its function is as follows. URF2 product may be involved in the transfer of iron-sulfur clusters to the NADH dehydrogenase complex. It may also be required for the assembly of the NADH dehydrogenase complex. This is an uncharacterized protein from Paracoccus denitrificans.